The chain runs to 212 residues: Adenylate kinase (212 aa).

Residue Gly10–Thr15 coordinates ATP. Residues Ala30–Val59 are NMP. AMP is bound by residues Arg36, Glu57–Val59, Gly85–Arg88, and Gln92. Positions Gly122 to Asp160 are LID. Arg123 lines the ATP pocket. Cys126 and Cys129 together coordinate Zn(2+). Residue Ile132 to Tyr133 coordinates ATP. 2 residues coordinate Zn(2+): Cys146 and Cys149. AMP is bound by residues Arg157 and Arg168. Lys196 serves as a coordination point for ATP.

Belongs to the adenylate kinase family. As to quaternary structure, monomer.

It is found in the cytoplasm. The catalysed reaction is AMP + ATP = 2 ADP. The protein operates within purine metabolism; AMP biosynthesis via salvage pathway; AMP from ADP: step 1/1. In terms of biological role, catalyzes the reversible transfer of the terminal phosphate group between ATP and AMP. Plays an important role in cellular energy homeostasis and in adenine nucleotide metabolism. In Rickettsia akari (strain Hartford), this protein is Adenylate kinase.